The following is a 360-amino-acid chain: Mannose-1-phosphate guanylyltransferase catalytic subunit beta (360 aa).

The substrate-binding domain stretch occupies residues 2-222 (KALILVGGYG…QGFWMDIGQP (221 aa)). D110 contacts GDP-alpha-D-mannose. D110 is a Mg(2+) binding site. The active site involves K162. D218 is a binding site for GDP-alpha-D-mannose. D218 serves as a coordination point for Mg(2+). Positions 245–360 (CSGPGIVGNV…ESVPEPRIIM (116 aa)) are hexapeptide repeat domain.

The protein belongs to the transferase hexapeptide repeat family. In terms of assembly, component of the GMPPA-GMPPB mannose-1-phosphate guanylyltransferase complex composed of 4 GMPPA subunits and 8 GMPPB subunits; the complex is organized into three layers, a central layer made up of 2 GMPPA dimers sandwiched between two layers each made up of 2 GMPPB dimers. GMPPB catalytic activity is reduced when part of the complex and binding of GDP-alpha-D-Mannose by GMPPA induces allosteric feedback inhibition of GMPPB. Requires Mg(2+) as cofactor. Ubiquitously expressed, including in brain and skeletal muscle. As to expression, weakly expressed with highest expression in skeletal muscle, brain and gonads.

It is found in the cytoplasm. The enzyme catalyses alpha-D-mannose 1-phosphate + GTP + H(+) = GDP-alpha-D-mannose + diphosphate. Its pathway is nucleotide-sugar biosynthesis; GDP-alpha-D-mannose biosynthesis; GDP-alpha-D-mannose from alpha-D-mannose 1-phosphate (GTP route): step 1/1. Its activity is regulated as follows. Enzyme activity is reduced by incorporation into the GMPPA-GMPPB mannose-1-phosphate guanylyltransferase complex. Allosterically inhibited, when part of the GMPPA-GMPPB complex, by GDP-alpha-D-mannose binding to GMPPA. Functionally, catalytic subunit of the GMPPA-GMPPB mannose-1-phosphate guanylyltransferase complex. Catalyzes the formation of GDP-mannose, an essential precursor of glycan moieties of glycoproteins and glycolipids. Can catalyze the reverse reaction in vitro. Together with GMPPA regulates GDP-alpha-D-mannose levels. The polypeptide is Mannose-1-phosphate guanylyltransferase catalytic subunit beta (Homo sapiens (Human)).